The primary structure comprises 371 residues: Neuropeptide S receptor (371 aa).

At 1–52 (MPANFTEGSFDSNGTGQMLDSSPVACTETVTFTEVVEGKEWGSFYYSFKTEQ) the chain is on the extracellular side. Asn4 and Asn13 each carry an N-linked (GlcNAc...) asparagine glycan. The helical transmembrane segment at 53 to 73 (LITLWVLFVFTIVGNSVVLFS) threads the bilayer. Over 74-82 (TWRRKRKSR) the chain is Cytoplasmic. A helical transmembrane segment spans residues 83 to 103 (MTFFVTQLAITDSFTGLVNIL). At 104–123 (TDIIWRFTGDFMAPDLVCRV) the chain is on the extracellular side. A disulfide bond links Cys121 and Cys197. Residues 124–144 (VRYLQVVLLYASTYVLVSLSI) traverse the membrane as a helical segment. Over 145 to 164 (DRYHAIVYPMKFLQGEKQAK) the chain is Cytoplasmic. A helical transmembrane segment spans residues 165–185 (VLIVIAWSLSFLFSIPTLIIF). Topologically, residues 186-212 (GKRTLSNGEVQCWALWPDDSYWTPYMT) are extracellular. The helical transmembrane segment at 213 to 233 (IVAFLVYFIPLTIISVMYGIV) threads the bilayer. Topologically, residues 234–275 (IRTIWIKSKTYETVISNCSDGKLCSSYNRGLISKAKIKAIKY) are cytoplasmic. A helical transmembrane segment spans residues 276–296 (SIVIILAFICCWSPYFLFDIL). Topologically, residues 297–312 (DNFNLLPDTQERFYAS) are extracellular. The helical transmembrane segment at 313-333 (VIIQNLPALNSAINPLIYCVF) threads the bilayer. Over 334 to 371 (SSSISFPCGERRSQDSIMTFRERTERHEMQILSKPEFI) the chain is Cytoplasmic.

This sequence belongs to the G-protein coupled receptor 1 family. Vasopressin/oxytocin receptor subfamily.

Its subcellular location is the cell membrane. Its function is as follows. G-protein coupled receptor for neuropeptide S (NPS). Promotes mobilization of intracellular Ca(2+) stores. Inhibits cell growth in response to NPS binding. Involved in pathogenesis of asthma and other IgE-mediated diseases. The polypeptide is Neuropeptide S receptor (NPSR1) (Macaca mulatta (Rhesus macaque)).